Consider the following 324-residue polypeptide: NADH-quinone oxidoreductase subunit H 2 (324 aa).

A run of 9 helical transmembrane segments spans residues 1–21 (MIGM…LLVV), 77–97 (ILAP…VAFG), 109–129 (VMFL…GALA), 147–167 (LGYE…AGSL), 179–199 (VWFV…GVAA), 214–234 (LVAG…FLGE), 238–258 (VLLV…GPVW), 263–283 (LPGP…FIWI), and 298–318 (FAWK…GLIV).

The protein belongs to the complex I subunit 1 family. As to quaternary structure, NDH-1 is composed of 14 different subunits. Subunits NuoA, H, J, K, L, M, N constitute the membrane sector of the complex.

It localises to the cell inner membrane. It catalyses the reaction a quinone + NADH + 5 H(+)(in) = a quinol + NAD(+) + 4 H(+)(out). NDH-1 shuttles electrons from NADH, via FMN and iron-sulfur (Fe-S) centers, to quinones in the respiratory chain. The immediate electron acceptor for the enzyme in this species is believed to be ubiquinone. Couples the redox reaction to proton translocation (for every two electrons transferred, four hydrogen ions are translocated across the cytoplasmic membrane), and thus conserves the redox energy in a proton gradient. This subunit may bind ubiquinone. The protein is NADH-quinone oxidoreductase subunit H 2 of Rhodopseudomonas palustris (strain BisB18).